The following is a 900-amino-acid chain: DNA mismatch repair protein MutS (900 aa).

637–644 (GPNMAGKS) contacts ATP.

Belongs to the DNA mismatch repair MutS family.

This protein is involved in the repair of mismatches in DNA. It is possible that it carries out the mismatch recognition step. This protein has a weak ATPase activity. In Methanosarcina barkeri (strain Fusaro / DSM 804), this protein is DNA mismatch repair protein MutS.